Here is a 244-residue protein sequence, read N- to C-terminus: MNKVNIKDSQNFITSKYHIEKIMNCISLDEKDNIFEIGAGKGHFTAELVKRCNFVTAIEIDSKLCEVTRNKLLNYPNYQIVNDDILKFTFPSHNPYKIFGSIPYNISTNIIRKIVFESSATISYLIVEYGFAKRLLDTNRSLALLLMAEVDISILAKIPRYYFHPKPKVDSALIVLKRKPAKMAFKERKKYETFVMKWVNKEYEKLFTKNQFNKALKHARIYDINNISFEQFVSLFNSYKIFNG.

S-adenosyl-L-methionine contacts are provided by N11, I13, G38, E59, D84, and S101.

It belongs to the class I-like SAM-binding methyltransferase superfamily. rRNA adenine N(6)-methyltransferase family.

Functionally, involved in erythromycin resistance. This Lysinibacillus sphaericus (Bacillus sphaericus) protein is rRNA adenine N-6-methyltransferase (ermG).